Here is a 438-residue protein sequence, read N- to C-terminus: Cyclic 2,3-diphosphoglycerate synthetase (438 aa).

The protein belongs to the cyclic 2,3-diphosphoglycerate synthetase family.

The protein resides in the cytoplasm. The catalysed reaction is (2R)-2,3-bisphosphoglycerate + ATP + H(+) = cyclic (2R)-2,3-bisphosphoglycerate + ADP + phosphate. In terms of biological role, catalyzes the formation of cyclic 2,3-diphosphoglycerate (cDPG) by formation of an intramolecular phosphoanhydride bond at the expense of ATP. The polypeptide is Cyclic 2,3-diphosphoglycerate synthetase (Thermococcus gammatolerans (strain DSM 15229 / JCM 11827 / EJ3)).